A 627-amino-acid chain; its full sequence is (-)-alpha-pinene synthase 1, chloroplastic (627 aa).

The transit peptide at 1–36 directs the protein to the chloroplast; it reads MALVSIAPLASKSCLHKSLSSSAHELKTICRTIPTL. Mg(2+)-binding residues include Asp-378, Asp-382, and Asp-530. Positions 378–382 match the DDXXD motif motif; sequence DDMYD.

Belongs to the terpene synthase family. Tpsd subfamily. It depends on Mg(2+) as a cofactor. The cofactor is Mn(2+).

It is found in the plastid. The protein resides in the chloroplast. The catalysed reaction is (2E)-geranyl diphosphate = (1S,5S)-beta-pinene + diphosphate. It catalyses the reaction (2E)-geranyl diphosphate = (1S,5S)-alpha-pinene + diphosphate. Its pathway is terpene metabolism; oleoresin biosynthesis. Its function is as follows. Terpene synthase (TPS) involved in the biosynthesis of monoterpene natural products included in conifer oleoresin secretions and volatile emissions; these compounds contribute to biotic and abiotic stress defense against herbivores and pathogens. Catalyzes the conversion of (2E)-geranyl diphosphate (GPP) to (1S,5S)-beta-pinene. The protein is (-)-alpha-pinene synthase 1, chloroplastic of Picea sitchensis (Sitka spruce).